A 337-amino-acid chain; its full sequence is D-alanine--D-alanine ligase (337 aa).

The ATP-grasp domain maps to 124–330 (KMWFSALGIP…FTEYLSLVIN (207 aa)). 154 to 209 (ALAQWGSIFVKAASQGSSVGCYKVDDSAKVAGVLKDAFGYAPYVIVEKTIKARELE) serves as a coordination point for ATP. Residues Asp-284, Glu-297, and Asn-299 each coordinate Mg(2+).

Belongs to the D-alanine--D-alanine ligase family. The cofactor is Mg(2+). It depends on Mn(2+) as a cofactor.

The protein resides in the cytoplasm. The enzyme catalyses 2 D-alanine + ATP = D-alanyl-D-alanine + ADP + phosphate + H(+). Its pathway is cell wall biogenesis; peptidoglycan biosynthesis. Functionally, cell wall formation. This Shewanella baltica (strain OS185) protein is D-alanine--D-alanine ligase.